Here is a 238-residue protein sequence, read N- to C-terminus: Lactate utilization protein A (238 aa).

This sequence belongs to the LutA/YkgE family.

In terms of biological role, is involved in L-lactate degradation and allows cells to grow with lactate as the sole carbon source. The chain is Lactate utilization protein A from Bacillus pumilus (strain SAFR-032).